The sequence spans 201 residues: Holliday junction branch migration complex subunit RuvA (201 aa).

The tract at residues 1-63 is domain I; it reads MIGCLIGEVF…EDAQQLYGFI (63 aa). The segment at 64-142 is domain II; sequence DAQEKLIFRT…ALSVQATTGS (79 aa). Residues 143–152 are flexible linker; sequence TVTSAQIQFS. Positions 152 to 201 are domain III; it reads SSNSPIAEAEAALQSLGYKPIEAQKAIAAVKADYTEAADLIRAALKSMMK.

Belongs to the RuvA family. In terms of assembly, homotetramer. Forms an RuvA(8)-RuvB(12)-Holliday junction (HJ) complex. HJ DNA is sandwiched between 2 RuvA tetramers; dsDNA enters through RuvA and exits via RuvB. An RuvB hexamer assembles on each DNA strand where it exits the tetramer. Each RuvB hexamer is contacted by two RuvA subunits (via domain III) on 2 adjacent RuvB subunits; this complex drives branch migration. In the full resolvosome a probable DNA-RuvA(4)-RuvB(12)-RuvC(2) complex forms which resolves the HJ.

The protein localises to the cytoplasm. Its function is as follows. The RuvA-RuvB-RuvC complex processes Holliday junction (HJ) DNA during genetic recombination and DNA repair, while the RuvA-RuvB complex plays an important role in the rescue of blocked DNA replication forks via replication fork reversal (RFR). RuvA specifically binds to HJ cruciform DNA, conferring on it an open structure. The RuvB hexamer acts as an ATP-dependent pump, pulling dsDNA into and through the RuvAB complex. HJ branch migration allows RuvC to scan DNA until it finds its consensus sequence, where it cleaves and resolves the cruciform DNA. This Acinetobacter baylyi (strain ATCC 33305 / BD413 / ADP1) protein is Holliday junction branch migration complex subunit RuvA.